The following is a 344-amino-acid chain: Thiamine thiazole synthase (344 aa).

Residues Cys-90, 111–112, Gly-119, and Val-184 each bind substrate; that span reads EA. Residue Cys-232 is modified to 2,3-didehydroalanine (Cys). Residues Asp-234, His-249, Met-301, and 311–313 each bind substrate; that span reads RMG.

The protein belongs to the THI4 family. As to quaternary structure, homooctamer. Interacts with cyp-41. Fe cation serves as cofactor. In terms of processing, during the catalytic reaction, a sulfide is transferred from Cys-232 to a reaction intermediate, generating a dehydroalanine residue.

The protein localises to the cytoplasm. It is found in the nucleus. The catalysed reaction is [ADP-thiazole synthase]-L-cysteine + glycine + NAD(+) = [ADP-thiazole synthase]-dehydroalanine + ADP-5-ethyl-4-methylthiazole-2-carboxylate + nicotinamide + 3 H2O + 2 H(+). Involved in biosynthesis of the thiamine precursor thiazole. Catalyzes the conversion of NAD and glycine to adenosine diphosphate 5-(2-hydroxyethyl)-4-methylthiazole-2-carboxylic acid (ADT), an adenylated thiazole intermediate. The reaction includes an iron-dependent sulfide transfer from a conserved cysteine residue of the protein to a thiazole intermediate. The enzyme can only undergo a single turnover, which suggests it is a suicide enzyme. May have additional roles in adaptation to various stress conditions and in DNA damage tolerance. In Neurospora crassa (strain ATCC 24698 / 74-OR23-1A / CBS 708.71 / DSM 1257 / FGSC 987), this protein is Thiamine thiazole synthase.